The following is a 360-amino-acid chain: Chorismate synthase (360 aa).

NADP(+)-binding residues include Arg-48 and Arg-54. FMN-binding positions include 125–127 (RSS), 242–243 (NG), Gly-283, 298–302 (KPTSS), and Arg-324.

This sequence belongs to the chorismate synthase family. In terms of assembly, homotetramer. FMNH2 serves as cofactor.

The catalysed reaction is 5-O-(1-carboxyvinyl)-3-phosphoshikimate = chorismate + phosphate. Its pathway is metabolic intermediate biosynthesis; chorismate biosynthesis; chorismate from D-erythrose 4-phosphate and phosphoenolpyruvate: step 7/7. Its function is as follows. Catalyzes the anti-1,4-elimination of the C-3 phosphate and the C-6 proR hydrogen from 5-enolpyruvylshikimate-3-phosphate (EPSP) to yield chorismate, which is the branch point compound that serves as the starting substrate for the three terminal pathways of aromatic amino acid biosynthesis. This reaction introduces a second double bond into the aromatic ring system. The polypeptide is Chorismate synthase (Gluconobacter oxydans (strain 621H) (Gluconobacter suboxydans)).